The chain runs to 559 residues: Potassium-transporting ATPase potassium-binding subunit (559 aa).

Transmembrane regions (helical) follow at residues 5-25, 27-47, 63-83, 132-152, 170-190, 253-273, 283-303, 327-347, 356-376, 379-399, 416-436, 484-504, and 524-544; these read GFLL…PLGS, LARL…RILW, LLAL…LLFW, GLTV…FALI, LVRI…LFFI, LAQM…FGEA, LLWA…WAEV, FGVL…CGAV, ALGG…FGGV, GLYG…LMIG, MTAL…ALAM, LLAF…MAIA, and GALF…LTFI.

This sequence belongs to the KdpA family. In terms of assembly, the system is composed of three essential subunits: KdpA, KdpB and KdpC.

The protein localises to the cell inner membrane. In terms of biological role, part of the high-affinity ATP-driven potassium transport (or Kdp) system, which catalyzes the hydrolysis of ATP coupled with the electrogenic transport of potassium into the cytoplasm. This subunit binds the periplasmic potassium ions and delivers the ions to the membrane domain of KdpB through an intramembrane tunnel. This Salmonella typhimurium (strain LT2 / SGSC1412 / ATCC 700720) protein is Potassium-transporting ATPase potassium-binding subunit.